The sequence spans 555 residues: Protection of telomeres protein 1 (555 aa).

The protein belongs to the telombin family. In terms of assembly, self-associates. Interacts with ccq1, poz1 and tpz1.

It is found in the nucleus. The protein localises to the chromosome. Its subcellular location is the telomere. Single-stranded telomeric DNA-binding protein that is required to protect the 3'-end telomeric overhang. It binds the consensus sequence 5'-GGTTAC-3'. Regulates telomerase and telomere length. The protein is Protection of telomeres protein 1 (pot1) of Schizosaccharomyces pombe (strain 972 / ATCC 24843) (Fission yeast).